The sequence spans 211 residues: Synaptosomal-associated protein 23 (211 aa).

Residue M1 is modified to N-acetylmethionine. 5 positions are modified to phosphoserine: S5, S6, S20, S23, and S34. One can recognise a t-SNARE coiled-coil homology 1 domain in the interval 14 to 76 (HQITDESLES…RETEKTLTEL (63 aa)). The stretch at 23-76 (STRRILGLAIESQDAGIKTITMLDEQKEQLNRIEEGLDQINKDMRETEKTLTEL) forms a coiled coil. 5 S-palmitoyl cysteine lipidation sites follow: C79, C80, C83, C85, and C87. S110 carries the post-translational modification Phosphoserine. The S-palmitoyl cysteine moiety is linked to residue C112. The region spanning 146 to 208 (DAREDEMEEN…DIANARAKKL (63 aa)) is the t-SNARE coiled-coil homology 2 domain. Phosphoserine is present on S161.

It belongs to the SNAP-25 family. Homotetramer (via coiled-coil domain), also forms heterotetramers with STX4 and VAMP3. Found in a complex with VAMP8 and STX1A. Found in a complex with VAMP8 and STX4 in pancreas. Interacts simultaneously with SNAPIN and SYN4. Interacts with STX1A. Interacts with STX12. Interacts tightly to multiple syntaxins and synaptobrevins/VAMPs. Interacts with ZDHHC13 (via ANK repeats). Interacts with ZDHHC17 (via ANK repeats). In terms of tissue distribution, ubiquitous. Highest levels where found in placenta.

It localises to the cell membrane. It is found in the synapse. Its subcellular location is the synaptosome. Essential component of the high affinity receptor for the general membrane fusion machinery and an important regulator of transport vesicle docking and fusion. This is Synaptosomal-associated protein 23 (SNAP23) from Homo sapiens (Human).